Consider the following 593-residue polypeptide: Arginine--tRNA ligase (593 aa).

The short motif at 138–148 (ANPTGPLHVGH) is the 'HIGH' region element.

The protein belongs to the class-I aminoacyl-tRNA synthetase family. As to quaternary structure, monomer.

It is found in the cytoplasm. It catalyses the reaction tRNA(Arg) + L-arginine + ATP = L-arginyl-tRNA(Arg) + AMP + diphosphate. The polypeptide is Arginine--tRNA ligase (Burkholderia vietnamiensis (strain G4 / LMG 22486) (Burkholderia cepacia (strain R1808))).